We begin with the raw amino-acid sequence, 1902 residues long: PII-type proteinase (1902 aa).

Residues 1–33 form the signal peptide; sequence MQRKKKGLSILLAGTVALGALAVLPVGEIQAKA. Residues 34-187 constitute a propeptide that is removed on maturation; it reads AISQQTKVSS…VTLAKVYYPT (154 aa). A Peptidase S8 domain is found at 191-697; it reads ANSMANVQAV…AGLVDVKAAI (507 aa). Residues aspartate 217, histidine 281, and serine 620 each act as charge relay system in the active site. The span at 1793–1805 shows a compositional bias: low complexity; sequence KTAGKGDDTTGTS. Residues 1793–1872 form a disordered region; it reads KTAGKGDDTT…GKGALPKTAE (80 aa). Positions 1867 to 1871 match the LPXTG sorting signal motif; sequence LPKTA. Threonine 1870 carries the post-translational modification Pentaglycyl murein peptidoglycan amidated threonine. Positions 1871 to 1902 are cleaved as a propeptide — removed by sortase; the sequence is AETTERPAFGFLGVIVVSLMGVLGLKRKQREE.

This sequence belongs to the peptidase S8 family.

The protein localises to the secreted. Its subcellular location is the cell wall. The catalysed reaction is Endopeptidase activity with very broad specificity, although some subsite preference have been noted, e.g. large hydrophobic residues in the P1 and P4 positions, and Pro in the P2 position. Best known for its action on caseins, although it has been shown to hydrolyze hemoglobin and oxidized insulin B-chain.. Protease which breaks down milk proteins during the growth of the bacteria on milk. The protein is PII-type proteinase (prtP) of Lacticaseibacillus paracasei (Lactobacillus paracasei).